We begin with the raw amino-acid sequence, 1805 residues long: Kinesin-like protein KIF13A (1805 aa).

The region spanning 5–352 is the Kinesin motor domain; sequence KVKVAVRVRP…LRYADRAKRI (348 aa). 102–109 serves as a coordination point for ATP; the sequence is GQTGSGKS. Residues 359-436 are a coiled coil; the sequence is NEDPNAKVIR…QLESMGISLE (78 aa). The 51-residue stretch at 469–519 folds into the FHA domain; the sequence is HTRVGADTSQDIQLFGIGIQPQHCEIDIASDGDVTLTPKENARSCVNGTLV. Residues 556–567 are compositionally biased toward basic and acidic residues; it reads EKETGPPEHDLD. Disordered stretches follow at residues 556–575 and 633–656; these read EKET…ASSE and QQLS…SQTA. Coiled-coil stretches lie at residues 602 to 775 and 1100 to 1138; these read VQVL…LYGK and DALI…EQWV. S636 carries the post-translational modification Phosphoserine. At S1287 the chain carries Phosphoserine. The segment covering 1385-1396 has biased composition (polar residues); it reads TPNVHNVSSSRP. Residues 1385 to 1404 form a disordered region; it reads TPNVHNVSSSRPDLSGFDED. Phosphoserine is present on residues S1454, I1481, S1490, and M1494. The disordered stretch occupies residues 1507-1531; the sequence is PSGSNGSSMPVEHNSKREKKIDSEE. A coiled-coil region spans residues 1518-1547; the sequence is EHNSKREKKIDSEEEENELEAINRKLISSQ. Residues 1519-1528 show a composition bias toward basic and acidic residues; it reads HNSKREKKID. A phosphoserine mark is found at S1529 and S1572. Over residues 1612–1621 the composition is skewed to low complexity; sequence MVVPSSDSSD. The interval 1612–1645 is disordered; that stretch reads MVVPSSDSSDQLAIQTKDADSTEHSTPSLVHDFR. Residues S1648 and S1698 each carry the phosphoserine modification. The interval 1749–1779 is disordered; it reads GLTDSSAGELSSRRSLPNKTGGKTVSDGLHH. Polar residues predominate over residues 1751-1771; that stretch reads TDSSAGELSSRRSLPNKTGGK.

Belongs to the TRAFAC class myosin-kinesin ATPase superfamily. Kinesin family. Interacts with AP2B1. Interacts with ZFYVE26. Interacts with AP1G1 and AP1G2. Widely expressed, with highest levels in heart, brain and skeletal muscle.

It localises to the cytoplasm. Its subcellular location is the cytoskeleton. The protein localises to the microtubule organizing center. It is found in the centrosome. The protein resides in the midbody. It localises to the endosome membrane. Its subcellular location is the golgi apparatus membrane. Its function is as follows. Plus end-directed microtubule-dependent motor protein involved in intracellular transport and regulating various processes such as mannose-6-phosphate receptor (M6PR) transport to the plasma membrane, endosomal sorting during melanosome biogenesis and cytokinesis. Mediates the transport of M6PR-containing vesicles from trans-Golgi network to the plasma membrane via direct interaction with the AP-1 complex. During melanosome maturation, required for delivering melanogenic enzymes from recycling endosomes to nascent melanosomes by creating peripheral recycling endosomal subdomains in melanocytes. Also required for the abscission step in cytokinesis: mediates translocation of ZFYVE26, and possibly TTC19, to the midbody during cytokinesis. The sequence is that of Kinesin-like protein KIF13A (KIF13A) from Homo sapiens (Human).